The chain runs to 339 residues: Non-homologous end joining protein Ku (339 aa).

Residues 10 to 187 (ITFGLVNIPV…LPKATTGKPT (178 aa)) enclose the Ku domain. 2 disordered regions span residues 230–251 (DSGK…RQGA) and 263–339 (SLGQ…KHAA). Residues 267–277 (RGKEDKEDATP) are compositionally biased toward basic and acidic residues. Positions 278 to 289 (ARRKAPARHAAA) are enriched in basic residues. Positions 290-310 (RKQPAAKRAATPPAKRASTAA) are enriched in low complexity.

Belongs to the prokaryotic Ku family. Homodimer. Interacts with LigD.

In terms of biological role, with LigD forms a non-homologous end joining (NHEJ) DNA repair enzyme, which repairs dsDNA breaks with reduced fidelity. Binds linear dsDNA with 5'- and 3'- overhangs but not closed circular dsDNA nor ssDNA. Recruits and stimulates the ligase activity of LigD. This chain is Non-homologous end joining protein Ku, found in Cupriavidus necator (strain ATCC 17699 / DSM 428 / KCTC 22496 / NCIMB 10442 / H16 / Stanier 337) (Ralstonia eutropha).